The following is a 210-amino-acid chain: Chaperone protein TorD (210 aa).

The protein belongs to the TorD/DmsD family. TorD subfamily.

Its subcellular location is the cytoplasm. Functionally, involved in the biogenesis of TorA. Acts on TorA before the insertion of the molybdenum cofactor and, as a result, probably favors a conformation of the apoenzyme that is competent for acquiring the cofactor. This Salmonella dublin (strain CT_02021853) protein is Chaperone protein TorD.